The primary structure comprises 546 residues: Probable ganciclovir kinase (546 aa).

Positions 1–11 (MEQLKTPQNQK) are enriched in polar residues. The segment at 1–29 (MEQLKTPQNQKTRPRNMLPKKKGKELKKR) is disordered. Residues 12–29 (TRPRNMLPKKKGKELKKR) show a composition bias toward basic residues. ATP-binding positions include 185–193 (LGSGSYGMV) and K202. The active-site Proton acceptor is D297.

It belongs to the protein kinase superfamily. Tyr protein kinase family. HCMV ganciclovir subfamily.

Phosphorylates the antiviral nucleoside analog ganciclovir. The polypeptide is Probable ganciclovir kinase (U69) (Human herpesvirus 7 (strain JI) (HHV-7)).